Here is a 665-residue protein sequence, read N- to C-terminus: BTB/POZ domain-containing protein At1g30440 (665 aa).

In terms of domain architecture, BTB spans 28 to 98 (SDIVVEVGEM…CYGVKLELTA (71 aa)). One can recognise an NPH3 domain in the interval 214-508 (DWWYEDASML…VQVLFFEQLQ (295 aa)). The tract at residues 260 to 280 (LKRRRGGPESSGRFSTPLGSG) is disordered. The segment covering 271 to 280 (GRFSTPLGSG) has biased composition (polar residues). Phosphoserine is present on Ser-279. A coiled-coil region spans residues 281–306 (NVLSEEEQKNLLEEIQELLRMQKGLV). Tyr-449 is modified (phosphotyrosine). Positions 626–639 (SAQEGSVSKSNNEN) are enriched in polar residues. The disordered stretch occupies residues 626 to 665 (SAQEGSVSKSNNENVKIEKLKDVKERRGKHKKASSISSER). Basic and acidic residues predominate over residues 640–650 (VKIEKLKDVKE).

This sequence belongs to the NPH3 family.

Its pathway is protein modification; protein ubiquitination. Functionally, may act as a substrate-specific adapter of an E3 ubiquitin-protein ligase complex (CUL3-RBX1-BTB) which mediates the ubiquitination and subsequent proteasomal degradation of target proteins. This chain is BTB/POZ domain-containing protein At1g30440, found in Arabidopsis thaliana (Mouse-ear cress).